The following is a 181-amino-acid chain: Early upstream open reading frame (181 aa).

Belongs to the EUO family.

The polypeptide is Early upstream open reading frame (Chlamydia caviae (strain ATCC VR-813 / DSM 19441 / 03DC25 / GPIC) (Chlamydophila caviae)).